The following is a 2271-amino-acid chain: MKRNQLKSWIFELREIKNSHYFVDSWDKFDSVGSFTYIFFHQERFMKLFDPRILSILLSHDSQDLTRNRYFNFTIKGVVLLVMGVLIFIFIYRINNRNMVERKNLYLMGLLPIPMNSIGLRNDTLEESFLSSNINRLIVSLLYLPKEKKISESFFMDPKGRSWVLPITKKCIVPESNWDLRGWRNRIVKKRDSSCKISNKRVAGIEISFKDKDIKYLEFLFVSYTDDPIRKDRDWELFDRLSPRKKRNIINLNSGQRFEILVKHLICYLMPAFHEKGSIEVEGFFKQQGAQATIQSNDIEHLSHLFSRNKWGISLQNCAQFHMWQFHQDLFVSWGKNKHESHFFRNVSRENWIWLDNVWLVNNDRFFSKVRNVSSNIQYDSTRSIFVQVTDSSQLKGSSDQSRDPFDSISNESSKYHTLINQTEIQQLKERLILLDPSFRQMERTETEREKQMDNHLFPAEVKKCLGNPTRSIRSFFSDRWSELPLGSNPTERSTRDQKLLKKQQDVSFVPSRRSENKEMFDIFKIITYLQNTVSIHPISSDPDMVPKDEPDRDSSNKISFLNKNPFFDLFHLFHDRNKEGYTFHYDFESEERFPEMSDLFTLSITEPNLVYHKGFAFSIDSYGLDQKKFLNEVSWDESKKKSFLVLPHIFYEENESFYRRIRRKSGRISCRNGLEEKKKKIVVFASNNIMGAVNQYRLIRDLIQIQYSPHGYIRNRLNRFLLMNRSDHNFEYGIQRDQIGNDTLNHITIMKYTINQHLSNLIKNRKKWHDSHSLIFPTERSMNRDPDAYRYKWSNESNNFQEHFEHFVSEQKNHFQVVFNQFRINQYSIDWSEVIDKQDLSKSFRFFLSNSLLFFSKSLPLFFLSIGNIPIHSREIHIYEFKGPNHQLCNQLLESIGVQIVHLKKLKPFLLDDHDISQRSKLLINGGTISPLFFNKIQGWVIDSFHIRKNRRKYLYNMDSYFSMISHDRDNCMNPVKPFHRSSLISSFYKANRLPFLNNSHRFWFYCDKRFPFYVEVEKARINNYDLAYAQFLNISFIRNKIFSLCVGKKKKPFLEIDAISPIESQVSDIFIPNDFPQSGDERYNLYKSFYFPTRSDLFVRRAIYSIADIFETPLTEGQIVHFERTYCQPLSDINLSESEGNNLHQYLSFNSNMGLIRIPCSEKYLPSRKRKKRSLCLKKCVEKRQMYRTFQRNSAFSNLSKWNLFQTYMPWFFTSTGCKYINLIFLDTFADPLPILSSSQKFLSIFHDIMHGSDILWPTENLSLLEAWSKIPLSQKKWWTILPQSNLISEISSKCLQNLLLSEEMIHRNNESPASLIWTHLIAPNAREFLYSILFLLLVAGYLVRTHLLFVSQTSSELQTEFEKIKSLMIPSYMVEVRKLLDRYPPLELNFLWLKNLFLVALEQLEDFMEKIWGSASGGNILLGGGPTYGVKSIRSKKKDLNINLIDIISIISNPINLITFSRKTRDLSRTSKEIYSWIRQRKNVNSDWIDDKIESWVANNDWIDDEEREFLVQFSTLTTEKRIDQILLSLTHSDRLSKNDSGYQMIEQPGSIYLRYLVDIHQKYLMNYEFSRFCLAERRIFLAHYQTITYSQSSCIANSSHFRSHGKPVSLRLVLSPSRGILVIGSIGTGRSYLVKYLATNSYVPFITVFPNKLLDDKPKDYFSDDIDIDESDDLNYDLDTELLTMTNVLTMYMTLKMDQFDITLQFELAEEMSPCIIWIPNIHELYVNESNYLSLSLLVNYLSRDCERCSTRNILVIASTPIPQKVDPALIAPNKSNTCIKIRRLLIPQERKHFFILSSTRGFHLEKKMFHTNRFGSISMGSNARDLVALTSEALSISITQKKSIIDTNTIKSALHRQTWDLRSQVRPVQDHGILFYQIGRAVAQNALLSNCSINPISIYMKKKSCKKGDSYLYKWYFELGTSMKKLTILLYLLSCSAGSVAQDLWSTSGPDEKNGITSYGFVENDSDLVHGLLEGVLVGSSRTEKDCSQFDNAQAQVTLLLRSEPRNQLDMMQNGSCSIVDQRFLYEKYESEFEEGEREGALDPQQIEEDLFNHIVWAPRTRIRRPCGNLFDCIERTNELGFPYWARSFRGKRIIYHKEDELQENDSEFLQSGTMQYQTRDRSSKEQGFFRISQFIWDPADPFFFLFKDQPFVSVFSRREFFADEEMSKGLITSQTNPPTSIYKRWFIKNTQEKHFELLIHRQRWLRTNSSLSNGSFRSNTPSESYQYLSNLFLSNGTLLDQMTKALLRKRWLFPDEMKHLIHVTG.

1628-1635 (GSIGTGRS) is a binding site for ATP.

It belongs to the Ycf2 family.

It localises to the plastid. It is found in the chloroplast stroma. Functionally, probable ATPase of unknown function. Its presence in a non-photosynthetic plant (Epifagus virginiana) and experiments in tobacco indicate that it has an essential function which is probably not related to photosynthesis. The protein is Protein Ycf2 of Illicium oligandrum (Star anise).